The sequence spans 179 residues: Large ribosomal subunit protein uL5 (179 aa).

It belongs to the universal ribosomal protein uL5 family. Part of the 50S ribosomal subunit; part of the 5S rRNA/L5/L18/L25 subcomplex. Contacts the 5S rRNA and the P site tRNA. Forms a bridge to the 30S subunit in the 70S ribosome.

Its function is as follows. This is one of the proteins that bind and probably mediate the attachment of the 5S RNA into the large ribosomal subunit, where it forms part of the central protuberance. In the 70S ribosome it contacts protein S13 of the 30S subunit (bridge B1b), connecting the 2 subunits; this bridge is implicated in subunit movement. Contacts the P site tRNA; the 5S rRNA and some of its associated proteins might help stabilize positioning of ribosome-bound tRNAs. The chain is Large ribosomal subunit protein uL5 from Bacillus velezensis (strain DSM 23117 / BGSC 10A6 / LMG 26770 / FZB42) (Bacillus amyloliquefaciens subsp. plantarum).